The chain runs to 937 residues: MORC family CW-type zinc finger protein 4 (937 aa).

The CW-type zinc finger occupies 420-472; the sequence is KVPDQTWVQCDECLKWRKLPGKIDPSMLPARWFCYYNSHPKYRRCSVPEEQEL. C429, C432, C453, and C464 together coordinate Zn(2+). Residues 606-637 form a disordered region; sequence PEGENSHDKSSSERSTPPYLFPEYPEASKNTG. The stretch at 762 to 876 forms a coiled coil; it reads KLKNQRELEE…LEMLQKAQVS (115 aa).

Expressed at low levels in normal tissues, with highest expression levels in placenta and testis. Expression is significantly increased in subset of diffuse large B-cell lymphomas.

The protein localises to the nucleus. Histone methylation reader which binds to non-methylated (H3K4me0), monomethylated (H3K4me1), dimethylated (H3K4me2) and trimethylated (H3K4me3) 'Lys-4' on histone H3. The order of binding preference is H3K4me3 &gt; H3K4me2 &gt; H3K4me1 &gt; H3K4me0. In Homo sapiens (Human), this protein is MORC family CW-type zinc finger protein 4 (MORC4).